The chain runs to 97 residues: Co-chaperonin GroES (97 aa).

Belongs to the GroES chaperonin family. Heptamer of 7 subunits arranged in a ring. Interacts with the chaperonin GroEL.

It is found in the cytoplasm. Its function is as follows. Together with the chaperonin GroEL, plays an essential role in assisting protein folding. The GroEL-GroES system forms a nano-cage that allows encapsulation of the non-native substrate proteins and provides a physical environment optimized to promote and accelerate protein folding. GroES binds to the apical surface of the GroEL ring, thereby capping the opening of the GroEL channel. The polypeptide is Co-chaperonin GroES (Aeromonas hydrophila subsp. hydrophila (strain ATCC 7966 / DSM 30187 / BCRC 13018 / CCUG 14551 / JCM 1027 / KCTC 2358 / NCIMB 9240 / NCTC 8049)).